The primary structure comprises 351 residues: Dihydroorotate dehydrogenase (quinone) (351 aa).

Residues 67 to 71 (AGFDK) and threonine 91 contribute to the FMN site. A substrate-binding site is contributed by lysine 71. 116 to 120 (NAMGF) is a binding site for substrate. Asparagine 145 and asparagine 178 together coordinate FMN. Asparagine 178 serves as a coordination point for substrate. The Nucleophile role is filled by serine 181. Position 183 (asparagine 183) interacts with substrate. Residues lysine 214 and threonine 242 each coordinate FMN. 243–244 (NT) serves as a coordination point for substrate. FMN is bound by residues glycine 262, glycine 291, and 312 to 313 (YS).

This sequence belongs to the dihydroorotate dehydrogenase family. Type 2 subfamily. In terms of assembly, monomer. The cofactor is FMN.

Its subcellular location is the cell membrane. It carries out the reaction (S)-dihydroorotate + a quinone = orotate + a quinol. Its pathway is pyrimidine metabolism; UMP biosynthesis via de novo pathway; orotate from (S)-dihydroorotate (quinone route): step 1/1. Functionally, catalyzes the conversion of dihydroorotate to orotate with quinone as electron acceptor. This is Dihydroorotate dehydrogenase (quinone) (pyrD) from Helicobacter pylori (strain ATCC 700392 / 26695) (Campylobacter pylori).